Reading from the N-terminus, the 208-residue chain is Holliday junction branch migration complex subunit RuvA (208 aa).

Residues 1–64 are domain I; sequence MIGKLKGIVD…EDMIRLYGFR (64 aa). Positions 65–143 are domain II; that stretch reads SDAEREWFRL…AFAPVDPALV (79 aa). The tract at residues 144 to 152 is flexible linker; that stretch reads ALTGAVEDR. Positions 153–208 are domain III; the sequence is TAPQPVADAISALVNLGYPQVQASAAIAAALKGLGDGAETVEAKTLIRLGLRELAR.

The protein belongs to the RuvA family. In terms of assembly, homotetramer. Forms an RuvA(8)-RuvB(12)-Holliday junction (HJ) complex. HJ DNA is sandwiched between 2 RuvA tetramers; dsDNA enters through RuvA and exits via RuvB. An RuvB hexamer assembles on each DNA strand where it exits the tetramer. Each RuvB hexamer is contacted by two RuvA subunits (via domain III) on 2 adjacent RuvB subunits; this complex drives branch migration. In the full resolvosome a probable DNA-RuvA(4)-RuvB(12)-RuvC(2) complex forms which resolves the HJ.

The protein resides in the cytoplasm. Its function is as follows. The RuvA-RuvB-RuvC complex processes Holliday junction (HJ) DNA during genetic recombination and DNA repair, while the RuvA-RuvB complex plays an important role in the rescue of blocked DNA replication forks via replication fork reversal (RFR). RuvA specifically binds to HJ cruciform DNA, conferring on it an open structure. The RuvB hexamer acts as an ATP-dependent pump, pulling dsDNA into and through the RuvAB complex. HJ branch migration allows RuvC to scan DNA until it finds its consensus sequence, where it cleaves and resolves the cruciform DNA. The sequence is that of Holliday junction branch migration complex subunit RuvA from Methylorubrum populi (strain ATCC BAA-705 / NCIMB 13946 / BJ001) (Methylobacterium populi).